A 30-amino-acid polypeptide reads, in one-letter code: Cycloviolacin-O4 (30 aa).

Positions G1–N30 form a cross-link, cyclopeptide (Gly-Asn). Intrachain disulfides connect C4/C20, C8/C22, and C13/C27.

This is a cyclic peptide. As to expression, expressed in petals, petioles, roots and runners but not in leaves (at protein level).

Its function is as follows. Probably participates in a plant defense mechanism. The polypeptide is Cycloviolacin-O4 (Viola odorata (Sweet violet)).